We begin with the raw amino-acid sequence, 687 residues long: Polyphosphate kinase (687 aa).

N45 lines the ATP pocket. The Mg(2+) site is built by R375 and R405. The active-site Phosphohistidine intermediate is H435. ATP-binding residues include Y472, R568, and H596.

The protein belongs to the polyphosphate kinase 1 (PPK1) family. Mg(2+) is required as a cofactor. An intermediate of this reaction is the autophosphorylated ppk in which a phosphate is covalently linked to a histidine residue through a N-P bond.

It carries out the reaction [phosphate](n) + ATP = [phosphate](n+1) + ADP. In terms of biological role, catalyzes the reversible transfer of the terminal phosphate of ATP to form a long-chain polyphosphate (polyP). The polypeptide is Polyphosphate kinase (Burkholderia multivorans (strain ATCC 17616 / 249)).